Reading from the N-terminus, the 338-residue chain is Lipoate-protein ligase A (338 aa).

In terms of domain architecture, BPL/LPL catalytic spans 29–216 (PATQRVLFLW…AFFAHYGERV (188 aa)). ATP is bound by residues Arg-71, 76 to 79 (GAVF), and Lys-134. Lys-134 is a binding site for (R)-lipoate.

It belongs to the LplA family. In terms of assembly, monomer.

The protein localises to the cytoplasm. It catalyses the reaction L-lysyl-[lipoyl-carrier protein] + (R)-lipoate + ATP = N(6)-[(R)-lipoyl]-L-lysyl-[lipoyl-carrier protein] + AMP + diphosphate + H(+). It functions in the pathway protein modification; protein lipoylation via exogenous pathway; protein N(6)-(lipoyl)lysine from lipoate: step 1/2. The protein operates within protein modification; protein lipoylation via exogenous pathway; protein N(6)-(lipoyl)lysine from lipoate: step 2/2. Functionally, catalyzes both the ATP-dependent activation of exogenously supplied lipoate to lipoyl-AMP and the transfer of the activated lipoyl onto the lipoyl domains of lipoate-dependent enzymes. The polypeptide is Lipoate-protein ligase A (Escherichia coli O6:K15:H31 (strain 536 / UPEC)).